A 133-amino-acid chain; its full sequence is CDGSH iron-sulfur domain-containing protein 2 homolog (133 aa).

The Lumenal portion of the chain corresponds to 1 to 35 (MEPISHLVKSSLPNYLSSLPVPDSIGGWFKLSFKD). Residues 36-58 (WLALIPPTVVVAGIGYTAYLAYC) form a helical membrane-spanning segment. At 59 to 133 (PAARASCSAK…DNVGPIVIKK (75 aa)) the chain is on the cytoplasmic side. Cys-100, Cys-102, Cys-111, and His-115 together coordinate [2Fe-2S] cluster.

This sequence belongs to the CISD protein family. CISD2 subfamily. The cofactor is [2Fe-2S] cluster.

It is found in the endoplasmic reticulum membrane. This Drosophila sechellia (Fruit fly) protein is CDGSH iron-sulfur domain-containing protein 2 homolog.